Here is a 483-residue protein sequence, read N- to C-terminus: PAT complex subunit CCDC47 (483 aa).

An N-terminal signal peptide occupies residues 1–20 (MKAFYAFCVVLLVFGSVSEA). Topologically, residues 21 to 135 (KFDDFEDEED…PAHLQNSWES (115 aa)) are cytoplasmic. Residues 46–119 (MEDSVTESPQ…DTSSNKNKDP (74 aa)) form a disordered region. A compositionally biased stretch (acidic residues) spans 60–104 (TEDDEDEATVELEGQDESQEGDFEDADTQEGDTESEPYDDEEFEG). Residues 105 to 118 (YEDKPDTSSNKNKD) are compositionally biased toward basic and acidic residues. A helical membrane pass occupies residues 136 to 156 (YYLEILMVTGLLAYIMNYIIG). The Lumenal portion of the chain corresponds to 157–483 (KNKNSRLAQA…KMKQIKVKAM (327 aa)). An N-linked (GlcNAc...) asparagine glycan is attached at Asn178. The interval 424–483 (QRQEAAQSRREEKKRAEKERIMNEEDPEKQRRLEEAALRREQKKLEKKQMKMKQIKVKAM) is disordered. The segment covering 430–472 (QSRREEKKRAEKERIMNEEDPEKQRRLEEAALRREQKKLEKKQ) has biased composition (basic and acidic residues). Residues 450–483 (PEKQRRLEEAALRREQKKLEKKQMKMKQIKVKAM) adopt a coiled-coil conformation. A compositionally biased stretch (basic residues) spans 473–483 (MKMKQIKVKAM).

Belongs to the CCDC47 family. As to quaternary structure, component of the PAT complex, composed of WDR83OS/Asterix and CCDC47. The PAT complex is part of the multi-pass translocon (MPT) complex, composed of three subcomplexes, the GEL complex (composed of RAB5IF/OPTI and TMCO1), the BOS complex (composed of NCLN/Nicalin, NOMO1 and TMEM147) and the PAT complex (composed of WDR83OS/Asterix and CCDC47). The MPT complex associates with the SEC61 complex. Interacts with VCP, HSPA5, DERL1, DERL2 and SELENOS. In terms of tissue distribution, in the embryo, expressed in the endodermal layer of the yolk sac and in the small intestine.

The protein localises to the endoplasmic reticulum membrane. The protein resides in the rough endoplasmic reticulum membrane. Its function is as follows. Component of the multi-pass translocon (MPT) complex that mediates insertion of multi-pass membrane proteins into the lipid bilayer of membranes. The MPT complex takes over after the SEC61 complex: following membrane insertion of the first few transmembrane segments of proteins by the SEC61 complex, the MPT complex occludes the lateral gate of the SEC61 complex to promote insertion of subsequent transmembrane regions. Within the MPT complex, the PAT subcomplex sequesters any highly polar regions in the transmembrane domains away from the non-polar membrane environment until they can be buried in the interior of the fully assembled protein. Within the PAT subcomplex, CCDC47 occludes the lateral gate of the SEC61 complex. Involved in the regulation of calcium ion homeostasis in the ER. Required for proper protein degradation via the ERAD (ER-associated degradation) pathway. Has an essential role in the maintenance of ER organization during embryogenesis. In Mus musculus (Mouse), this protein is PAT complex subunit CCDC47.